Consider the following 562-residue polypeptide: Ribonuclease Y (562 aa).

Residues M1 to G21 traverse the membrane as a helical segment. The segment at A108–E129 is disordered. Residues S252 to L312 enclose the KH domain. The HD domain maps to V378–A471.

This sequence belongs to the RNase Y family.

The protein resides in the cell membrane. In terms of biological role, endoribonuclease that initiates mRNA decay. The protein is Ribonuclease Y of Deinococcus geothermalis (strain DSM 11300 / CIP 105573 / AG-3a).